The sequence spans 270 residues: MDSTPTSTDTLVIGGRQFRSRLFTGTGKYPNLALMQQSLDRSDCEMVTVAVRRVQTVAAGHAGLMEAIDWTKIWMLPNTAGCTTAEEAIRVARLGRELARLAGQEHNTFVKLEVIPDSRHLLPDPFGTLEAAEQLVKEGFTVLPYINADPLLAKRLEEVGCATVMPLGSPIGSGQGLRNASNIALIIENASVPVVVDAGIGVPSEASAALEMGADAVLVNSAIALAGNPPLMAEAMASAVRAGRQAFQAGRLPTRAQASPSSPTTGKVND.

Lys-111 acts as the Schiff-base intermediate with DXP in catalysis. 1-deoxy-D-xylulose 5-phosphate is bound by residues Gly-172, 198 to 199, and 220 to 221; these read AG and NS. The tract at residues 249–270 is disordered; sequence AGRLPTRAQASPSSPTTGKVND. Residues 256–270 are compositionally biased toward polar residues; it reads AQASPSSPTTGKVND.

It belongs to the ThiG family. Homotetramer. Forms heterodimers with either ThiH or ThiS.

It is found in the cytoplasm. It catalyses the reaction [ThiS sulfur-carrier protein]-C-terminal-Gly-aminoethanethioate + 2-iminoacetate + 1-deoxy-D-xylulose 5-phosphate = [ThiS sulfur-carrier protein]-C-terminal Gly-Gly + 2-[(2R,5Z)-2-carboxy-4-methylthiazol-5(2H)-ylidene]ethyl phosphate + 2 H2O + H(+). It functions in the pathway cofactor biosynthesis; thiamine diphosphate biosynthesis. Functionally, catalyzes the rearrangement of 1-deoxy-D-xylulose 5-phosphate (DXP) to produce the thiazole phosphate moiety of thiamine. Sulfur is provided by the thiocarboxylate moiety of the carrier protein ThiS. In vitro, sulfur can be provided by H(2)S. This is Thiazole synthase from Synechococcus sp. (strain WH7803).